Consider the following 248-residue polypeptide: 4-hydroxy-tetrahydrodipicolinate reductase (248 aa).

Residues 9-14, 77-79, and 104-107 contribute to the NAD(+) site; these read GARGKV, GTT, and APNF. His134 serves as the catalytic Proton donor/acceptor. Residue His135 participates in (S)-2,3,4,5-tetrahydrodipicolinate binding. Lys138 functions as the Proton donor in the catalytic mechanism. 144-145 contributes to the (S)-2,3,4,5-tetrahydrodipicolinate binding site; sequence GT.

It belongs to the DapB family.

It localises to the cytoplasm. The catalysed reaction is (S)-2,3,4,5-tetrahydrodipicolinate + NAD(+) + H2O = (2S,4S)-4-hydroxy-2,3,4,5-tetrahydrodipicolinate + NADH + H(+). It catalyses the reaction (S)-2,3,4,5-tetrahydrodipicolinate + NADP(+) + H2O = (2S,4S)-4-hydroxy-2,3,4,5-tetrahydrodipicolinate + NADPH + H(+). It participates in amino-acid biosynthesis; L-lysine biosynthesis via DAP pathway; (S)-tetrahydrodipicolinate from L-aspartate: step 4/4. Catalyzes the conversion of 4-hydroxy-tetrahydrodipicolinate (HTPA) to tetrahydrodipicolinate. The chain is 4-hydroxy-tetrahydrodipicolinate reductase from Nocardia farcinica (strain IFM 10152).